The sequence spans 1360 residues: DNA-directed RNA polymerase subunit beta (1360 aa).

The protein belongs to the RNA polymerase beta chain family. As to quaternary structure, the RNAP catalytic core consists of 2 alpha, 1 beta, 1 beta' and 1 omega subunit. When a sigma factor is associated with the core the holoenzyme is formed, which can initiate transcription.

The catalysed reaction is RNA(n) + a ribonucleoside 5'-triphosphate = RNA(n+1) + diphosphate. DNA-dependent RNA polymerase catalyzes the transcription of DNA into RNA using the four ribonucleoside triphosphates as substrates. The sequence is that of DNA-directed RNA polymerase subunit beta from Desulfotalea psychrophila (strain LSv54 / DSM 12343).